Consider the following 317-residue polypeptide: Transaldolase (317 aa).

The Schiff-base intermediate with substrate role is filled by lysine 126.

Belongs to the transaldolase family. Type 1 subfamily. In terms of assembly, homodimer.

The protein localises to the cytoplasm. The enzyme catalyses D-sedoheptulose 7-phosphate + D-glyceraldehyde 3-phosphate = D-erythrose 4-phosphate + beta-D-fructose 6-phosphate. The protein operates within carbohydrate degradation; pentose phosphate pathway; D-glyceraldehyde 3-phosphate and beta-D-fructose 6-phosphate from D-ribose 5-phosphate and D-xylulose 5-phosphate (non-oxidative stage): step 2/3. Transaldolase is important for the balance of metabolites in the pentose-phosphate pathway. The sequence is that of Transaldolase from Burkholderia pseudomallei (strain 1710b).